A 257-amino-acid polypeptide reads, in one-letter code: 5'-nucleotidase SurE (257 aa).

Asp9, Asp10, Ser42, and Asn96 together coordinate a divalent metal cation.

Belongs to the SurE nucleotidase family. The cofactor is a divalent metal cation.

It localises to the cytoplasm. The catalysed reaction is a ribonucleoside 5'-phosphate + H2O = a ribonucleoside + phosphate. Nucleotidase that shows phosphatase activity on nucleoside 5'-monophosphates. The sequence is that of 5'-nucleotidase SurE from Campylobacter lari (strain RM2100 / D67 / ATCC BAA-1060).